The chain runs to 158 residues: 3-hydroxyacyl-[acyl-carrier-protein] dehydratase FabZ (158 aa).

His-62 is an active-site residue.

The protein belongs to the thioester dehydratase family. FabZ subfamily.

It is found in the cytoplasm. It catalyses the reaction a (3R)-hydroxyacyl-[ACP] = a (2E)-enoyl-[ACP] + H2O. In terms of biological role, involved in unsaturated fatty acids biosynthesis. Catalyzes the dehydration of short chain beta-hydroxyacyl-ACPs and long chain saturated and unsaturated beta-hydroxyacyl-ACPs. This Novosphingobium aromaticivorans (strain ATCC 700278 / DSM 12444 / CCUG 56034 / CIP 105152 / NBRC 16084 / F199) protein is 3-hydroxyacyl-[acyl-carrier-protein] dehydratase FabZ.